The sequence spans 252 residues: uncharacterized protein (252 aa).

9–33 (LITGGSAGIGLELAKRLLELGNEVI) is an NADP(+) binding site. Ser139 contacts substrate. The active-site Proton acceptor is the Tyr152.

Belongs to the short-chain dehydrogenases/reductases (SDR) family.

Its subcellular location is the cytoplasm. This is an uncharacterized protein from Bacillus subtilis (strain 168).